The following is a 349-amino-acid chain: MGCNSSSLNKLQVPEVRASRSNTPASQKSSDQSYSHIRLLLLGSAESGKTTVLEQVRLLYKQHFTESEYFHRRAFIYHNIFKCIKSLCRAMKMSDIGFADPINMGRSQSIIADEENHYGIFSKELAEKIKCIWADKSMQSLYARRSQFNLNDSAAYFLNNLDKINTLDYKPSDRDLIMAYVPTCGVQNVIFTASNQSFQLFDIGGQKIDRRKWATQYEGIDAIFFCLAISEYDQKMNEDMVTNRLDDALKLLETISEEPMFATTPIYLFLNEIDVFCEKLDVIPLSNYRKDFPGGDQDDALDFMENLAVAALGKRDKSLYRVYRCIAIDTQMMAELLSTVFKDIMKRKR.

A lipid anchor (N-myristoyl glycine) is attached at glycine 2. The S-palmitoyl cysteine moiety is linked to residue cysteine 3. One can recognise a G-alpha domain in the interval 35-349 (SHIRLLLLGS…VFKDIMKRKR (315 aa)). The tract at residues 38-51 (RLLLLGSAESGKTT) is G1 motif. GTP is bound by residues 43–50 (GSAESGKT), 177–183 (IMAYVPT), 202–206 (DIGGQ), 271–274 (NEID), and alanine 327. Residues 175-183 (DLIMAYVPT) form a G2 motif region. Residue threonine 183 coordinates Mg(2+). Positions 198–207 (FQLFDIGGQK) are G3 motif. A G4 motif region spans residues 267–274 (YLFLNEID). A G5 motif region spans residues 325–330 (CIAIDT).

The protein belongs to the G-alpha family. G proteins are composed of 3 units; alpha, beta and gamma. The alpha chain contains the guanine nucleotide binding site.

Functionally, guanine nucleotide-binding proteins (G proteins) are involved as modulators or transducers in various transmembrane signaling systems. In Caenorhabditis briggsae, this protein is Guanine nucleotide-binding protein alpha-13 subunit.